Reading from the N-terminus, the 359-residue chain is Pyruvate dehydrogenase E1 component subunit beta, mitochondrial (359 aa).

The transit peptide at 1 to 19 (MLGVIRNKTIRPSFSAFRF) directs the protein to the mitochondrion. A thiamine diphosphate-binding site is contributed by Glu-82. Residues Ile-135, Ala-183, Ile-184, and Asp-186 each contribute to the K(+) site.

Tetramer of 2 alpha and 2 beta subunits. Requires thiamine diphosphate as cofactor.

The protein resides in the mitochondrion matrix. The enzyme catalyses N(6)-[(R)-lipoyl]-L-lysyl-[protein] + pyruvate + H(+) = N(6)-[(R)-S(8)-acetyldihydrolipoyl]-L-lysyl-[protein] + CO2. Its function is as follows. The pyruvate dehydrogenase complex catalyzes the overall conversion of pyruvate to acetyl-CoA and CO(2). It contains multiple copies of three enzymatic components: pyruvate dehydrogenase (E1), dihydrolipoamide acetyltransferase (E2) and lipoamide dehydrogenase (E3). The protein is Pyruvate dehydrogenase E1 component subunit beta, mitochondrial of Pisum sativum (Garden pea).